A 580-amino-acid polypeptide reads, in one-letter code: Laccase-20 (580 aa).

An N-terminal signal peptide occupies residues 1 to 23 (MVASLLCTVAVAVLAVAAVGGEA). Plastocyanin-like domains are found at residues 31 to 147 (VVHE…PRDG) and 156 to 310 (KDVP…YTGV). 2 N-linked (GlcNAc...) asparagine glycosylation sites follow: Asn-36 and Asn-42. His-81 and His-83 together coordinate Cu cation. An N-linked (GlcNAc...) asparagine glycan is attached at Asn-115. The Cu cation site is built by His-126 and His-128. Asn-200, Asn-339, Asn-373, Asn-392, Asn-399, Asn-429, and Asn-460 each carry an N-linked (GlcNAc...) asparagine glycan. The Plastocyanin-like 3 domain occupies 419-561 (DFPVRPPRPY…ATAFIVEDGP (143 aa)). Cu cation contacts are provided by Asn-478, His-481, His-483, His-540, Cys-541, His-542, His-546, and Met-551. A disordered region spans residues 560-580 (GPTPETSLPPPPPEFKRCDAS).

The protein belongs to the multicopper oxidase family. Cu cation is required as a cofactor.

It localises to the secreted. Its subcellular location is the extracellular space. The protein resides in the apoplast. It carries out the reaction 4 hydroquinone + O2 = 4 benzosemiquinone + 2 H2O. In terms of biological role, lignin degradation and detoxification of lignin-derived products. In Oryza sativa subsp. japonica (Rice), this protein is Laccase-20 (LAC20).